Reading from the N-terminus, the 601-residue chain is Glutamine--tRNA ligase (601 aa).

Positions 76-86 (PEPNGYLHIGH) match the 'HIGH' region motif. ATP is bound by residues 77–79 (EPN) and 83–89 (HIGHAKS). The L-glutamine site is built by Asp109 and Tyr253. ATP-binding positions include Thr272, 301–302 (RL), and 309–311 (MSK). The short motif at 308 to 312 (VMSKR) is the 'KMSKS' region element.

It belongs to the class-I aminoacyl-tRNA synthetase family. As to quaternary structure, monomer.

Its subcellular location is the cytoplasm. It carries out the reaction tRNA(Gln) + L-glutamine + ATP = L-glutaminyl-tRNA(Gln) + AMP + diphosphate. The protein is Glutamine--tRNA ligase of Rhodopirellula baltica (strain DSM 10527 / NCIMB 13988 / SH1).